Here is a 293-residue protein sequence, read N- to C-terminus: F-box only protein 6 (293 aa).

An F-box domain is found at 10-57 (LDSINELPENILLELFTHVPARQLLLNCRLVCSLWRDLIDLMTLWKRK). The region spanning 78 to 259 (FYFLRSLHRN…VTNSSIVVSP (182 aa)) is the FBA domain. S258 carries the post-translational modification Phosphoserine. The span at 261-271 (MTRNQASSEAQ) shows a compositional bias: polar residues. The tract at residues 261 to 285 (MTRNQASSEAQPGQKHGQEEAAQSP) is disordered. S284 is modified (phosphoserine).

As to quaternary structure, interacts with VCP. Part of a SCF (SKP1-cullin-F-box) protein ligase complex. Interacts with CHEK1 and CUL1.

The protein localises to the cytoplasm. It functions in the pathway protein modification; protein ubiquitination. Substrate-recognition component of some SCF (SKP1-CUL1-F-box protein)-type E3 ubiquitin ligase complexes. Involved in endoplasmic reticulum-associated degradation pathway (ERAD) for misfolded lumenal proteins by recognizing and binding sugar chains on unfolded glycoproteins that are retrotranslocated into the cytosol and promoting their ubiquitination and subsequent degradation. Able to recognize and bind denatured glycoproteins, which are modified with not only high-mannose but also complex-type oligosaccharides. Also recognizes sulfated glycans. Also involved in DNA damage response by specifically recognizing activated CHEK1 (phosphorylated on 'Ser-345'), promoting its ubiquitination and degradation. Ubiquitination of CHEK1 is required to ensure that activated CHEK1 does not accumulate as cells progress through S phase, or when replication forks encounter transient impediments during normal DNA replication. The chain is F-box only protein 6 (FBXO6) from Homo sapiens (Human).